The sequence spans 134 residues: Phosphoribosyl-AMP cyclohydrolase (134 aa).

Mg(2+) is bound at residue aspartate 78. Zn(2+) is bound at residue cysteine 79. The Mg(2+) site is built by aspartate 80 and aspartate 82. Positions 96 and 103 each coordinate Zn(2+).

Belongs to the PRA-CH family. As to quaternary structure, homodimer. Requires Mg(2+) as cofactor. It depends on Zn(2+) as a cofactor.

The protein localises to the cytoplasm. The enzyme catalyses 1-(5-phospho-beta-D-ribosyl)-5'-AMP + H2O = 1-(5-phospho-beta-D-ribosyl)-5-[(5-phospho-beta-D-ribosylamino)methylideneamino]imidazole-4-carboxamide. The protein operates within amino-acid biosynthesis; L-histidine biosynthesis; L-histidine from 5-phospho-alpha-D-ribose 1-diphosphate: step 3/9. In terms of biological role, catalyzes the hydrolysis of the adenine ring of phosphoribosyl-AMP. The chain is Phosphoribosyl-AMP cyclohydrolase from Cupriavidus taiwanensis (strain DSM 17343 / BCRC 17206 / CCUG 44338 / CIP 107171 / LMG 19424 / R1) (Ralstonia taiwanensis (strain LMG 19424)).